The following is a 530-amino-acid chain: MSAKEKFTSLSPAEFFKRNPELAGFPNPARALYQTVRELIENSLDATDVHGILPNIKITIDLIDEARQIYKVNVVDNGIGIPPQEVPNAFGRVLYSSKYVNRQTRGMYGLGVKAAVLYSQMHQDKPIEIETSPANSKRIYTFKLKIDINKNEPIIVERGSVENTRGFHGTSVAISIPGDWPKAKSRIYEYIKRTYIITPYAEFIFKDPEGNVTYYPRLTNKIPKPPQEVKPHPYGVDREEIKILINNLKRDYTIKEFLVNEFQSIGDTTADKILELAGLKPNKKVKNLTEEEITRLVETFKKYEDFRSPSADSLSVIGEDLIELGLKKIFNPDFAASITRKPKAYQGHPFIVEAGVAFGGSIPVGEEPIVLRYANKIPLIYDEKSDVIWKVVEELDWKRYGIESDQYQMVVMVHLCSTKIPYKSAGKESIAEVEDIEKEIKNALMEVARKLKQYLSEKRKEQEAKKKLLAYLKYIPEVSRSLATFLASGNKELVSKYQNEISEGLFKLISKKLDLINIEEYRKVYRVDSE.

ATP-binding positions include Asn-42, Asp-76, 97 to 98 (SK), 106 to 113 (GMYGLGVK), and Lys-427.

Belongs to the TOP6B family. In terms of assembly, homodimer. Heterotetramer of two Top6A and two Top6B chains.

It carries out the reaction ATP-dependent breakage, passage and rejoining of double-stranded DNA.. In terms of biological role, relaxes both positive and negative superturns and exhibits a strong decatenase activity. The protein is Type 2 DNA topoisomerase 6 subunit B of Saccharolobus islandicus (strain M.16.4 / Kamchatka #3) (Sulfolobus islandicus).